The following is a 536-amino-acid chain: Nucleosome assembly protein 1-like 3 (536 aa).

Disordered stretches follow at residues 1 to 104 (MAEA…DKLP) and 160 to 338 (PTEE…KEDP). Positions 35-75 (SNSSSSTTSCGSTGSSSSSSSSSSSSSSSSSGSSGSSSNGS) are enriched in low complexity. A compositionally biased stretch (basic residues) spans 77–95 (LHQKKRVPGPSRRAQRRPS). Over residues 160–184 (PTEEECEWNSEEEFSGDEEMQDDTP) the composition is skewed to acidic residues. 2 stretches are compositionally biased toward basic and acidic residues: residues 199–220 (GKEN…PEAK) and 227–269 (PKET…KTDS). Over residues 287–300 (TQANAEYTDQPTED) the composition is skewed to polar residues. The segment covering 306-324 (PVREAQKRVPETRPEERVN) has biased composition (basic and acidic residues).

Belongs to the nucleosome assembly protein (NAP) family.

Its subcellular location is the nucleus. This is Nucleosome assembly protein 1-like 3 (Nap1l3) from Rattus norvegicus (Rat).